The chain runs to 350 residues: MNFLPNGICFYLSVAICWFSSRVDASWWYMGTLGSQVMCDNIPGLINKQRQLCRQHPKVMQAIGAGIKNWIGECQHQFRTHRWNCNTMAREHNLFGRLLHRSSREAAFVYAISSAGMVYTLTRACSQGELENCSCDPGKKGSSRDAKGAFDWGGCSDHVDHAIKFTQVFIDAKERKERDARALMNLHNNRAGRKAVKRFMNLECKCHGVSGSCNVRTCWLAMADFRQTGDYLRKKYNNAIQVVMNQYGTGFTSAYRMLKRPNKNDLVYFEDSPDYCIWDHESGSVGTGGRVCNRTSRGTDSCEVMCCGRGYDTSRVSRTTKCECKFQWCCAVHCRDCQEEVDVHTCKTQS.

The N-terminal stretch at 1 to 25 (MNFLPNGICFYLSVAICWFSSRVDA) is a signal peptide. 11 cysteine pairs are disulfide-bonded: Cys74/Cys85, Cys125/Cys133, Cys135/Cys155, Cys204/Cys218, Cys206/Cys213, Cys276/Cys307, Cys292/Cys302, Cys306/Cys346, Cys322/Cys337, Cys324/Cys334, and Cys329/Cys330. Asn132 is a glycosylation site (N-linked (GlcNAc...) asparagine). Residue Ser210 is the site of O-palmitoleoyl serine; by PORCN attachment. N-linked (GlcNAc...) asparagine glycosylation is present at Asn293.

This sequence belongs to the Wnt family. Palmitoleoylation is required for efficient binding to frizzled receptors. Depalmitoleoylation leads to Wnt signaling pathway inhibition.

It localises to the secreted. The protein resides in the extracellular space. The protein localises to the extracellular matrix. Its function is as follows. Ligand for members of the frizzled family of seven transmembrane receptors. Functions in the canonical Wnt signaling pathway that results in activation of transcription factors of the TCF/LEF family. This is Protein Wnt-2 (wnt2) from Danio rerio (Zebrafish).